A 202-amino-acid chain; its full sequence is FMN-dependent NADH:quinone oxidoreductase (202 aa).

Residues Ser-9, 15–17, 95–98, and 139–142 each bind FMN; these read SAS, MYNF, and TSGG.

This sequence belongs to the azoreductase type 1 family. As to quaternary structure, homodimer. It depends on FMN as a cofactor.

The catalysed reaction is 2 a quinone + NADH + H(+) = 2 a 1,4-benzosemiquinone + NAD(+). The enzyme catalyses N,N-dimethyl-1,4-phenylenediamine + anthranilate + 2 NAD(+) = 2-(4-dimethylaminophenyl)diazenylbenzoate + 2 NADH + 2 H(+). Functionally, quinone reductase that provides resistance to thiol-specific stress caused by electrophilic quinones. In terms of biological role, also exhibits azoreductase activity. Catalyzes the reductive cleavage of the azo bond in aromatic azo compounds to the corresponding amines. This chain is FMN-dependent NADH:quinone oxidoreductase, found in Pseudomonas savastanoi pv. phaseolicola (strain 1448A / Race 6) (Pseudomonas syringae pv. phaseolicola (strain 1448A / Race 6)).